The following is a 72-amino-acid chain: Beta-defensin 104A (72 aa).

The first 22 residues, 1 to 22 (MRRLVLLLAISLLLYQDLPVRS), serve as a signal peptide directing secretion. Disulfide bonds link Cys-30/Cys-57, Cys-37/Cys-51, and Cys-41/Cys-58.

The protein belongs to the beta-defensin family.

It is found in the secreted. Has antimicrobial activity. This chain is Beta-defensin 104A (DEFB104A), found in Pongo pygmaeus (Bornean orangutan).